A 522-amino-acid polypeptide reads, in one-letter code: Sorting nexin-1 (522 aa).

The disordered stretch occupies residues 1–142 (MASGGGGCSA…ELEEEEQEDQ (142 aa)). Phosphoserine occurs at positions 32 and 39. Over residues 35–45 (EAGDSDTEGED) the composition is skewed to acidic residues. Residues Thr-41 and Thr-48 each carry the phosphothreonine modification. Ser-58 and Ser-72 each carry phosphoserine. Positions 132–142 (EELEEEEQEDQ) are enriched in acidic residues. The PX domain occupies 143-272 (FDLTVGITDP…EFLEKEELPR (130 aa)). Arg-186, Ser-188, and Lys-214 together coordinate a 1,2-diacyl-sn-glycero-3-phospho-(1D-myo-inositol-3-phosphate). Phosphoserine is present on Ser-188. Position 237 is an N6-acetyllysine (Lys-237). Arg-238 is an a 1,2-diacyl-sn-glycero-3-phospho-(1D-myo-inositol-3-phosphate) binding site. At Ser-280 the chain carries Phosphoserine. Positions 281–298 (GAGLLKMFNKATDAVSKM) are membrane-binding amphipathic helix. The region spanning 302 to 522 (MNESDIWFEE…AFLPEAKAIS (221 aa)) is the BAR domain.

The protein belongs to the sorting nexin family. Predominantly forms heterodimers with BAR domain-containing sorting nexins SNX5, SNX6 and SNX32; can self-associate to form homodimers. The heterodimers are proposed to self-assemble into helical arrays on the membrane to stabilize and expand local membrane curvature underlying endosomal tubule formation. Thought to be a component of the originally described retromer complex (also called SNX-BAR retromer) which is a pentamer containing the heterotrimeric retromer cargo-selective complex (CSC), also described as vacuolar protein sorting subcomplex (VPS) and a heterodimeric membrane-deforming subcomplex formed between SNX1 or SNX2 and SNX5 or SNX6 (also called SNX-BAR subcomplex); the respective CSC and SNX-BAR subcomplexes associate with low affinity. Interacts with SNX5, SNX6, SNX32, VPS26A, VPS29, VPS35, DRD5, DENND5A, KALRN, RHOG (GDP-bound form). The interaction with SNX2 is reported controversially. Interacts with DNAJC13; prevented by presence of HGS. Interacts with HGS.

The protein localises to the endosome membrane. It is found in the golgi apparatus. Its subcellular location is the trans-Golgi network membrane. It localises to the early endosome membrane. The protein resides in the cell projection. The protein localises to the lamellipodium. In terms of biological role, involved in several stages of intracellular trafficking. Interacts with membranes containing phosphatidylinositol 3-phosphate (PtdIns(3P)) or phosphatidylinositol 3,5-bisphosphate (PtdIns(3,5)P2). Acts in part as component of the retromer membrane-deforming SNX-BAR subcomplex. The SNX-BAR retromer mediates retrograde transport of cargo proteins from endosomes to the trans-Golgi network (TGN) and is involved in endosome-to-plasma membrane transport for cargo protein recycling. The SNX-BAR subcomplex functions to deform the donor membrane into a tubular profile called endosome-to-TGN transport carrier (ETC). Can sense membrane curvature and has in vitro vesicle-to-membrane remodeling activity. Involved in retrograde endosome-to-TGN transport of lysosomal enzyme receptors (IGF2R, M6PR and SORT1). Plays a role in targeting ligand-activated EGFR to the lysosomes for degradation after endocytosis from the cell surface and release from the Golgi. Involvement in retromer-independent endocytic trafficking of P2RY1 and lysosomal degradation of protease-activated receptor-1/F2R. Promotes KALRN- and RHOG-dependent but retromer-independent membrane remodeling such as lamellipodium formation; the function is dependent on GEF activity of KALRN. Required for endocytosis of DRD5 upon agonist stimulation but not for basal receptor trafficking. In Bos taurus (Bovine), this protein is Sorting nexin-1 (SNX1).